A 542-amino-acid polypeptide reads, in one-letter code: Membrane protein insertase YidC (542 aa).

Transmembrane regions (helical) follow at residues 7–27 (LLVMGLLLVSFLIFTQWQQDF), 338–358 (FALLTFIQSIVTNWGLAIIGV), 417–437 (MGGCLPILIQMPIFIALYWTF), 455–475 (LSAQDPYYILPLLMGASMFLL), and 494–514 (FMPVMFTVFFLWFPSGLVLYW).

This sequence belongs to the OXA1/ALB3/YidC family. Type 1 subfamily. In terms of assembly, interacts with the Sec translocase complex via SecD. Specifically interacts with transmembrane segments of nascent integral membrane proteins during membrane integration.

It is found in the cell inner membrane. Functionally, required for the insertion and/or proper folding and/or complex formation of integral membrane proteins into the membrane. Involved in integration of membrane proteins that insert both dependently and independently of the Sec translocase complex, as well as at least some lipoproteins. Aids folding of multispanning membrane proteins. This chain is Membrane protein insertase YidC, found in Actinobacillus pleuropneumoniae serotype 3 (strain JL03).